The primary structure comprises 322 residues: Tetraacyldisaccharide 4'-kinase (322 aa).

Residue 54 to 61 coordinates ATP; that stretch reads SVGGTGKT.

This sequence belongs to the LpxK family.

It carries out the reaction a lipid A disaccharide + ATP = a lipid IVA + ADP + H(+). It participates in glycolipid biosynthesis; lipid IV(A) biosynthesis; lipid IV(A) from (3R)-3-hydroxytetradecanoyl-[acyl-carrier-protein] and UDP-N-acetyl-alpha-D-glucosamine: step 6/6. In terms of biological role, transfers the gamma-phosphate of ATP to the 4'-position of a tetraacyldisaccharide 1-phosphate intermediate (termed DS-1-P) to form tetraacyldisaccharide 1,4'-bis-phosphate (lipid IVA). The sequence is that of Tetraacyldisaccharide 4'-kinase from Francisella philomiragia subsp. philomiragia (strain ATCC 25017 / CCUG 19701 / FSC 153 / O#319-036).